Here is a 464-residue protein sequence, read N- to C-terminus: Glycosyl hydrolase family 109 protein 1 (464 aa).

An N-terminal signal peptide occupies residues 1–16 (MFKHLNALFIGLALFA). The N-palmitoyl cysteine moiety is linked to residue Cys-17. Cys-17 carries the S-diacylglycerol cysteine lipid modification. NAD(+)-binding positions include 63–64 (MR), Asp-85, 134–137 (WKHH), 154–155 (EV), and Asn-183. Substrate-binding positions include Tyr-212, Arg-228, 240-243 (YATH), and Tyr-318. Tyr-240 lines the NAD(+) pocket.

Belongs to the Gfo/Idh/MocA family. Glycosyl hydrolase 109 subfamily. NAD(+) is required as a cofactor.

The protein resides in the cell membrane. In terms of biological role, glycosidase. Has no alpha-N-acetylgalactosaminidase activity. The protein is Glycosyl hydrolase family 109 protein 1 of Bacteroides fragilis (strain ATCC 25285 / DSM 2151 / CCUG 4856 / JCM 11019 / LMG 10263 / NCTC 9343 / Onslow / VPI 2553 / EN-2).